The primary structure comprises 1005 residues: PH and SEC7 domain-containing protein 4 (1005 aa).

Positions 27–66 are disordered; the sequence is YPSEIHGHPGPSEPCQEHTCPFDPPESARPDAPHGNSGVE. Residues Ser85, Ser88, and Ser97 each carry the phosphoserine modification. 4 disordered regions span residues 145 to 189, 287 to 386, 407 to 525, and 694 to 714; these read PSKD…PGSS, LALG…NRGE, TSLL…SSSR, and EEDA…KISS. Residues 161-177 show a composition bias toward acidic residues; the sequence is EEDEDSGDDSSGPEEEN. Low complexity predominate over residues 350 to 361; it reads SQTSQSLSDLTQ. Phosphoserine occurs at positions 381 and 435. Over residues 428 to 438 the composition is skewed to low complexity; the sequence is PVSSQDSSPRV. 2 stretches are compositionally biased toward basic and acidic residues: residues 453 to 465 and 476 to 488; these read LQKD…SLKE and QEAE…RSED. In terms of domain architecture, SEC7 spans 493-686; the sequence is QHHVHLASAE…KALYWSIRSE (194 aa). Positions 726–841 constitute a PH domain; sequence PTYKQGILAR…WIARINLAAA (116 aa). The stretch at 870–926 forms a coiled coil; that stretch reads SSLEEQHRSHENCLDAASDDLLDLQRNLPERRGRSRELEEYRLRKEYLEHEKTRYET. The segment at 951–1005 is disordered; the sequence is KETDGSQEPRPSLKKSHSSPSLHQEEAPTTAKVKRNISERRTYRKIIPKRNRNQL. 2 positions are modified to phosphoserine: Ser968 and Ser971. Basic residues predominate over residues 992–1005; that stretch reads TYRKIIPKRNRNQL.

The protein localises to the cell membrane. It is found in the cell projection. It localises to the ruffle membrane. Guanine nucleotide exchange factor for ARF6 and ARL14/ARF7. Through ARL14 activation, controls the movement of MHC class II-containing vesicles along the actin cytoskeleton in dendritic cells. Involved in membrane recycling. Interacts with several phosphatidylinositol phosphate species, including phosphatidylinositol 3,4-bisphosphate, phosphatidylinositol 3,5-bisphosphate and phosphatidylinositol 4,5-bisphosphate. This is PH and SEC7 domain-containing protein 4 (Psd4) from Mus musculus (Mouse).